A 114-amino-acid chain; its full sequence is Secretoglobin family 2B member 2 (114 aa).

The N-terminal stretch at 1–23 (MKGTLLLLALLVTGELGFQRTEA) is a signal peptide.

The protein belongs to the secretoglobin family. In terms of tissue distribution, expressed in lacrimal gland.

The protein localises to the secreted. The protein is Secretoglobin family 2B member 2 (Scgb2b2) of Mus musculus (Mouse).